Here is a 206-residue protein sequence, read N- to C-terminus: N-(5'-phosphoribosyl)anthranilate isomerase (206 aa).

Belongs to the TrpF family.

The enzyme catalyses N-(5-phospho-beta-D-ribosyl)anthranilate = 1-(2-carboxyphenylamino)-1-deoxy-D-ribulose 5-phosphate. It functions in the pathway amino-acid biosynthesis; L-tryptophan biosynthesis; L-tryptophan from chorismate: step 3/5. This is N-(5'-phosphoribosyl)anthranilate isomerase from Nitrosococcus oceani (strain ATCC 19707 / BCRC 17464 / JCM 30415 / NCIMB 11848 / C-107).